The following is a 179-amino-acid chain: Large ribosomal subunit protein uL5 (179 aa).

This sequence belongs to the universal ribosomal protein uL5 family. In terms of assembly, part of the 50S ribosomal subunit; part of the 5S rRNA/L5/L18/L25 subcomplex. Contacts the 5S rRNA and the P site tRNA. Forms a bridge to the 30S subunit in the 70S ribosome.

Functionally, this is one of the proteins that bind and probably mediate the attachment of the 5S RNA into the large ribosomal subunit, where it forms part of the central protuberance. In the 70S ribosome it contacts protein S13 of the 30S subunit (bridge B1b), connecting the 2 subunits; this bridge is implicated in subunit movement. Contacts the P site tRNA; the 5S rRNA and some of its associated proteins might help stabilize positioning of ribosome-bound tRNAs. The protein is Large ribosomal subunit protein uL5 of Natranaerobius thermophilus (strain ATCC BAA-1301 / DSM 18059 / JW/NM-WN-LF).